The chain runs to 149 residues: 2S seed storage albumin protein (149 aa).

An N-terminal signal peptide occupies residues Met1–Leu22. Disulfide bonds link Cys38–Cys98, Cys52–Cys87, Cys88–Cys133, and Cys100–Cys140. No IgE-binding regions lie at residues Gln41–Asn53, Ala68–Glu81, Leu84–Glu95, and Glu97–Met105. Positions Glu108–Thr117 are igE-binding. A no IgE-binding region spans residues Lys121 to Asn131. An igE-binding region spans residues Lys132–His141.

This sequence belongs to the 2S seed storage albumins family. In terms of tissue distribution, expressed in seeds (at protein level). Expressed in seeds.

Functionally, seed storage protein. The polypeptide is 2S seed storage albumin protein (Fagopyrum tataricum (Tartarian buckwheat)).